A 348-amino-acid polypeptide reads, in one-letter code: Cylicin-2 (348 aa).

Residues 25–347 are 31 X 3 AA repeats of K-K-X; sequence KKSWNQQHFA…DEKKDAKKKG (323 aa). Disordered stretches follow at residues 35-59 and 101-348; these read LLFPKPQRPGTKRRSKPSQIRDNTV and PTRT…KKGK. 4 stretches are compositionally biased toward basic and acidic residues: residues 103-159, 166-217, 238-267, and 276-342; these read RTVE…DAKK, KDAE…EKDS, KADEKKDEDGKKDANKGDESKDAKKDAKEI, and KPSS…EKKD. Repeat copies occupy residues 157 to 184, 185 to 212, and 213 to 240. Residues 157 to 240 form a 3 X approximate tandem repeats region; the sequence is AKKDSKKGKK…AIELQAVKAD (84 aa).

As to expression, testis.

The protein localises to the cytoplasm. It is found in the cytoskeleton. Its subcellular location is the perinuclear theca. The protein resides in the calyx. Functionally, plays a role in the establishment of normal sperm morphology during spermatogenesis. It is required for acrosome attachment to the nuclear envelope, and proper manchette elongation and disassembly. This Homo sapiens (Human) protein is Cylicin-2 (CYLC2).